We begin with the raw amino-acid sequence, 102 residues long: Protein CASC2, isoform 3 (102 aa).

Expressed in normal and neoplastic endometrial tissues.

Its function is as follows. May act as a potential tumor suppressor. This is Protein CASC2, isoform 3 (CASC2) from Homo sapiens (Human).